A 620-amino-acid chain; its full sequence is MKMLLIHSDYLEFEAKEKTKIAEETENLKGKLDECLACFIAVEREDENNPEGTAIGAVEEIEKVANQLKVNNIVVYPYAHLSSDLSSPETAVKVLKDIESILKERGYNVLRAPFGWYKAFKISCKGHPLSELSRKIVAKEEKKEEGEESKFYLLNPETEEIIELNENNINIIKDEELLALAKHELGIREHKEHDEPPHVKFIKEKDICSYEEASDPGHFRWYPKGKLMRDLLADYVYNLVVNMGAMPVETPIMYDLGNPAIREHADKFGERQYRFRQGNKELMLRFAACFGQFMMKKDMYLLPRYLPLKLYELSTYSFRYEQRGELVGLKRLRCFTMPDMHTVCLNLEQAMEEFEKQFWECLKTGDDLNLSYSVIFRFTKDFFDEHRDWFFKIAKEYKNKYGKDVILEILPKRKHYWVGKVDIAVIDSLGRPIENPTVQIDVESAKRFDIKVHTNEGEIYPIILHCSPTGSIERVLCGLLEKAAIEAEKGNAPMLPVWLSPIQVRVIPVAERHYDYALKVAEKLRENNIRADFDDREESVSKKIRNAGKEWVPYVVVIGDEEMESDKLTVTIREKSTLKKPYKEKMTLDELIERIKKETANYPYRPLPLPIRCSLQPKFH.

The interval 1–141 is editing domain; sequence MKMLLIHSDY…LSRKIVAKEE (141 aa). A catalytic region spans residues 197-496; it reads PHVKFIKEKD…AEKGNAPMLP (300 aa). Residues cysteine 289, histidine 341, and histidine 465 each contribute to the Zn(2+) site.

The protein belongs to the class-II aminoacyl-tRNA synthetase family. In terms of assembly, homodimer. It depends on Zn(2+) as a cofactor.

The protein localises to the cytoplasm. It catalyses the reaction tRNA(Thr) + L-threonine + ATP = L-threonyl-tRNA(Thr) + AMP + diphosphate + H(+). Its activity is regulated as follows. Not inhibited by 1 uM borrelidin (BN); probably does not bind BN. Its function is as follows. Catalyzes the attachment of threonine to tRNA(Thr) in a two-step reaction: L-threonine is first activated by ATP to form Thr-AMP and then transferred to the acceptor end of tRNA(Thr). Also activates L-serine, but does not detectably transfer it to tRNA(Thr). Edits incorrectly charged L-seryl-tRNA(Thr) via its editing domain. Has no activity on correctly acylated L-seryl-tRNA(Ser) or L-threonyl-tRNA(Thr). Deacylates correctly charged glycyl-tRNA(Gly), but not glycyl-tRNA(Gly)(2'-dA76) (the terminal 2'-OH of tRNA adenine 76 has been dehydroxylated) nor the 2'-fluoro tRNA derivative, strongly suggesting the editing function is tRNA catalyzed. The protein is Threonine--tRNA ligase of Methanocaldococcus jannaschii (strain ATCC 43067 / DSM 2661 / JAL-1 / JCM 10045 / NBRC 100440) (Methanococcus jannaschii).